A 249-amino-acid polypeptide reads, in one-letter code: Aquaporin TIP4-1 (249 aa).

Met-1 is subject to N-acetylmethionine. At 1-20 the chain is on the cytoplasmic side; the sequence is MKKIELGHHSEAAKPDCIKA. Position 3 is an N6,N6-dimethyllysine (Lys-3). The helical transmembrane segment at 21-41 threads the bilayer; sequence LIVEFITTFLFVFAGVGSAMA. Residues 42-49 are Vacuolar-facing; the sequence is TDSLVGNT. Residues 50-70 form a helical membrane-spanning segment; sequence LVGLFAVAVAHAFVVAVMISA. At 71 to 105 the chain is on the cytoplasmic side; the sequence is GHISGGHLNPAVTLGLLLGGHISVFRAFLYWIDQL. Residues 79-81 carry the NPA 1 motif; it reads NPA. The helical transmembrane segment at 106–126 threads the bilayer; it reads LASSAACFLLSYLTGGMGTPV. The Vacuolar segment spans residues 127-137; it reads HTLASGVSYTQ. A helical transmembrane segment spans residues 138–158; the sequence is GIIWEIILTFSLLFTVYATIV. Over 159-166 the chain is Cytoplasmic; the sequence is DPKKGSLD. A helical membrane pass occupies residues 167–187; that stretch reads GFGPLLTGFVVGANILAGGAF. Topologically, residues 188–212 are vacuolar; that stretch reads SGASMNPARSFGPALVSGNWTDHWV. Residues 193–195 carry the NPA 2 motif; it reads NPA. Residues 213 to 233 form a helical membrane-spanning segment; the sequence is YWVGPLIGGGLAGFIYENVLI. Residues 234–249 lie on the Cytoplasmic side of the membrane; sequence DRPHVPVADDEQPLLN.

Belongs to the MIP/aquaporin (TC 1.A.8) family. TIP (TC 1.A.8.10) subfamily. In terms of tissue distribution, expressed in roots.

Its subcellular location is the vacuole membrane. Its function is as follows. Aquaporins facilitate the transport of water and small neutral solutes across cell membranes. Transports urea in yeast cells in a pH-independent manner. The protein is Aquaporin TIP4-1 (TIP4-1) of Arabidopsis thaliana (Mouse-ear cress).